Reading from the N-terminus, the 655-residue chain is Sphingomyelin phosphodiesterase 3 (655 aa).

At 1–10 (MVLYTTPFPN) the chain is on the cytoplasmic side. The segment at residues 11 to 31 (SCLSALHAVSWALIFPCYWLV) is an intramembrane region (helical). Residues 32–64 (DRLLASFIPTTYEKRQRADDPCCLQLFCTVLFT) lie on the Cytoplasmic side of the membrane. S-palmitoyl cysteine attachment occurs at residues Cys53, Cys54, and Cys59. The helical intramembrane region spans 65 to 85 (PVYLALLVAALPFAFLGFIFW). The Cytoplasmic segment spans residues 86–655 (SPLQSARRPY…LMVSAGEEEA (570 aa)). Residue Ser178 is modified to Phosphoserine. The disordered stretch occupies residues 209-318 (VEYKGDGGRH…SGGSGEPGAN (110 aa)). Composition is skewed to basic and acidic residues over residues 211–221 (YKGDGGRHPSD) and 246–255 (GGEEGGRPQE). At Ser289 the chain carries Phosphoserine. Glu362 is a Mg(2+) binding site. Residues Cys395 and Cys396 are each lipidated (S-palmitoyl cysteine). Residue His639 is the Proton acceptor of the active site.

Belongs to the neutral sphingomyelinase family. It depends on Mg(2+) as a cofactor. In terms of processing, palmitoylated, palmitoylation-deficient proteins are targeted for lysosomal degradation. As to expression, predominantly expressed in brain (at protein level).

The protein resides in the golgi apparatus membrane. Its subcellular location is the cell membrane. The enzyme catalyses a sphingomyelin + H2O = phosphocholine + an N-acylsphing-4-enine + H(+). It carries out the reaction N-(15Z-tetracosenoyl)sphing-4-enine-1-phosphocholine + H2O = N-(15Z-tetracosenoyl)-sphing-4-enine + phosphocholine + H(+). It catalyses the reaction N-(tetracosanoyl)-sphing-4-enine-1-phosphocholine + H2O = N-tetracosanoyl-sphing-4-enine + phosphocholine + H(+). The catalysed reaction is N-(hexadecanoyl)-sphing-4-enine-1-phosphocholine + H2O = N-hexadecanoylsphing-4-enine + phosphocholine + H(+). The enzyme catalyses an N-(acyl)-sphingosylphosphocholine + H2O = an N-acyl-sphingoid base + phosphocholine + H(+). It carries out the reaction 1-hexadecanoyl-sn-glycero-3-phosphocholine + H2O = 1-hexadecanoyl-sn-glycerol + phosphocholine + H(+). It catalyses the reaction 1-O-octadecyl-sn-glycero-3-phosphocholine + H2O = 1-O-octadecyl-sn-glycerol + phosphocholine + H(+). The catalysed reaction is a sphingosylphosphocholine + H2O = a sphingoid base + phosphocholine + H(+). It participates in lipid metabolism; sphingolipid metabolism. With respect to regulation, inhibited by nSMase inhibitor GW4869. Binding of anionic phospholipids (APLs) such as phosphatidylserine (PS) and phosphatidic acid (PA) increases enzymatic activity. Catalyzes the hydrolysis of sphingomyelin to form ceramide and phosphocholine. Ceramide mediates numerous cellular functions, such as apoptosis and growth arrest, and is capable of regulating these 2 cellular events independently. Also hydrolyzes sphingosylphosphocholine. Regulates the cell cycle by acting as a growth suppressor in confluent cells. Probably acts as a regulator of postnatal development and participates in bone and dentin mineralization. Binds to anionic phospholipids (APLs) such as phosphatidylserine (PS) and phosphatidic acid (PA) that modulate enzymatic activity and subcellular location. May be involved in IL-1-beta-induced JNK activation in hepatocytes. May act as a mediator in transcriptional regulation of NOS2/iNOS via the NF-kappa-B activation under inflammatory conditions. The chain is Sphingomyelin phosphodiesterase 3 from Mus musculus (Mouse).